The sequence spans 263 residues: Indole-3-glycerol phosphate synthase (263 aa).

This sequence belongs to the TrpC family.

The catalysed reaction is 1-(2-carboxyphenylamino)-1-deoxy-D-ribulose 5-phosphate + H(+) = (1S,2R)-1-C-(indol-3-yl)glycerol 3-phosphate + CO2 + H2O. It functions in the pathway amino-acid biosynthesis; L-tryptophan biosynthesis; L-tryptophan from chorismate: step 4/5. The sequence is that of Indole-3-glycerol phosphate synthase from Desulfosudis oleivorans (strain DSM 6200 / JCM 39069 / Hxd3) (Desulfococcus oleovorans).